A 267-amino-acid chain; its full sequence is 3-methyl-2-oxobutanoate hydroxymethyltransferase (267 aa).

Positions 41 and 80 each coordinate Mg(2+). Residues 41 to 42 (DS), Asp80, and Lys109 contribute to the 3-methyl-2-oxobutanoate site. A Mg(2+)-binding site is contributed by Glu111. Glu178 acts as the Proton acceptor in catalysis.

It belongs to the PanB family. As to quaternary structure, homodecamer; pentamer of dimers. Mg(2+) is required as a cofactor.

The protein localises to the cytoplasm. It carries out the reaction 3-methyl-2-oxobutanoate + (6R)-5,10-methylene-5,6,7,8-tetrahydrofolate + H2O = 2-dehydropantoate + (6S)-5,6,7,8-tetrahydrofolate. It participates in cofactor biosynthesis; (R)-pantothenate biosynthesis; (R)-pantoate from 3-methyl-2-oxobutanoate: step 1/2. In terms of biological role, catalyzes the reversible reaction in which hydroxymethyl group from 5,10-methylenetetrahydrofolate is transferred onto alpha-ketoisovalerate to form ketopantoate. This is 3-methyl-2-oxobutanoate hydroxymethyltransferase from Kosmotoga olearia (strain ATCC BAA-1733 / DSM 21960 / TBF 19.5.1).